The primary structure comprises 985 residues: Rho guanine nucleotide exchange factor 2 (985 aa).

The disordered stretch occupies residues M1–K32. The segment at G39–C86 adopts a Phorbol-ester/DAG-type zinc-finger fold. Phosphoserine is present on residues S109, S122, S129, S133, and S137. Residues R131–D161 are interaction with DYNLT1. S143 carries the post-translational modification Phosphoserine; by PAK4. Residues S151, S163, S172, S174, and S177 each carry the phosphoserine modification. Residues K236–D433 form the DH domain. N6-acetyllysine is present on K354. Positions K473–R572 constitute a PH domain. The stretch at L591–M619 forms a coiled coil. A phosphoserine mark is found at S646 and S649. The residue at position 680 (T680) is a Phosphothreonine; by MAPK1 or MAPK3. A phosphoserine mark is found at S692, S710, and S781. At T795 the chain carries Phosphothreonine. The stretch at E797–E866 forms a coiled coil. S885 is subject to Phosphoserine. Disordered stretches follow at residues D890–D909 and H918–S985. The residue at position 893 (Y893) is a Phosphotyrosine. S895 is subject to Phosphoserine; by PAK4. A compositionally biased stretch (basic and acidic residues) spans R919–D938. Phosphoserine is present on residues S931, S939, and S940. Residues S940–E949 are compositionally biased toward acidic residues. A Phosphothreonine modification is found at T944. Residues S946, S951, S952, S955, and S959 each carry the phosphoserine modification.

Found in a complex composed at least of ARHGEF2, NOD2 and RIPK2. Interacts with RIPK2; the interaction mediates tyrosine phosphorylation of RIPK2 by Src kinase CSK. Interacts with RIPK1 and RIPK3. Interacts with YWHAZ/14-3-3 zeta; when phosphorylated at Ser-885. Interacts with the kinases PAK4, AURKA and MAPK1. Interacts with RHOA and RAC1. Interacts with NOD1. Interacts (via the N- terminal zinc finger) with CAPN6 (via domain II). Interacts with DYNLT1. Post-translationally, phosphorylation of Ser-885 by PAK1 induces binding to protein YWHAZ, promoting its relocation to microtubules and the inhibition of its activity. Phosphorylated by AURKA and CDK1 during mitosis, which negatively regulates its activity. Phosphorylation by MAPK1 or MAPK3 increases nucleotide exchange activity. Phosphorylation by PAK4 releases GEF-H1 from the microtubules. Phosphorylated on serine, threonine and tyrosine residues in a RIPK2-dependent manner. In terms of tissue distribution, ubiquitous, with the exception of liver tissue. Levels are high in hemopoietic tissues (thymus, spleen, bone marrow) as well as in kidney and lung. Expressed in the germinal zones of both the neocortex and the cerebellum and in the pontine gray nuclei.

Its subcellular location is the cytoplasm. The protein resides in the cytoskeleton. The protein localises to the cell junction. It is found in the tight junction. It localises to the golgi apparatus. Its subcellular location is the spindle. The protein resides in the cytoplasmic vesicle. Functionally, activates Rho-GTPases by promoting the exchange of GDP for GTP. May be involved in epithelial barrier permeability, cell motility and polarization, dendritic spine morphology, antigen presentation, leukemic cell differentiation, cell cycle regulation, innate immune response, and cancer. Binds Rac-GTPases, but does not seem to promote nucleotide exchange activity toward Rac-GTPases. May stimulate instead the cortical activity of Rac. Inactive toward CDC42, TC10, or Ras-GTPases. Forms an intracellular sensing system along with NOD1 for the detection of microbial effectors during cell invasion by pathogens. Involved in innate immune signaling transduction pathway promoting cytokine IL6/interleukin-6 and TNF-alpha secretion in macrophage upon stimulation by bacterial peptidoglycans; acts as a signaling intermediate between NOD2 receptor and RIPK2 kinase. Contributes to the tyrosine phosphorylation of RIPK2 through Src tyrosine kinase leading to NF-kappaB activation by NOD2. Overexpression activates Rho-, but not Rac-GTPases, and increases paracellular permeability. Involved in neuronal progenitor cell division and differentiation. Involved in the migration of precerebellar neurons. In Mus musculus (Mouse), this protein is Rho guanine nucleotide exchange factor 2 (Arhgef2).